The following is a 427-amino-acid chain: Large ribosomal subunit protein uL4 (427 aa).

A2 is subject to N-acetylalanine. Residue K14 is modified to N6-acetyllysine. R97 is modified (omega-N-methylarginine). K106 carries the N6-acetyllysine modification. Residue K239 forms a Glycyl lysine isopeptide (Lys-Gly) (interchain with G-Cter in SUMO2) linkage. An N6-acetyllysine modification is found at K259. T266 is modified (phosphothreonine). Phosphoserine is present on residues S290 and S295. R300 carries the citrulline modification. K327 participates in a covalent cross-link: Glycyl lysine isopeptide (Lys-Gly) (interchain with G-Cter in SUMO2). N6-acetyllysine occurs at positions 333 and 353. Residue K364 is modified to N6-acetyllysine; alternate. A Glycyl lysine isopeptide (Lys-Gly) (interchain with G-Cter in SUMO1); alternate cross-link involves residue K364. S365 is modified (phosphoserine). The interval 369 to 427 (AAVAGKKPVVGKKGKKAAVGVKKQKKPLVGKKAAATKKPAPEKKPAEKKPTTEEKKPAA) is disordered. The span at 377-397 (VVGKKGKKAAVGVKKQKKPLV) shows a compositional bias: basic residues. Positions 407-427 (PAPEKKPAEKKPTTEEKKPAA) are enriched in basic and acidic residues.

Belongs to the universal ribosomal protein uL4 family. Component of the large ribosomal subunit. May bind IPO9 with low affinity. Interacts with RBM3. Post-translationally, citrullinated by PADI4.

It localises to the cytoplasm. In terms of biological role, component of the large ribosomal subunit. The ribosome is a large ribonucleoprotein complex responsible for the synthesis of proteins in the cell. The protein is Large ribosomal subunit protein uL4 (RPL4) of Homo sapiens (Human).